The chain runs to 401 residues: Enoyl-[acyl-carrier-protein] reductase [NADH] 1 (401 aa).

NAD(+) contacts are provided by residues 48–53 (GSSSGY), 74–75 (FE), 111–112 (DA), and 139–140 (LA). Residue Tyr-225 participates in substrate binding. The active-site Proton donor is the Tyr-235. Residues Lys-244 and 273-275 (VVT) contribute to the NAD(+) site.

It belongs to the TER reductase family. Monomer.

It carries out the reaction a 2,3-saturated acyl-[ACP] + NAD(+) = a (2E)-enoyl-[ACP] + NADH + H(+). The catalysed reaction is a 2,3-saturated acyl-CoA + NAD(+) = a (2E)-enoyl-CoA + NADH + H(+). It catalyses the reaction (2E)-butenoyl-[ACP] + NADH + H(+) = butanoyl-[ACP] + NAD(+). The enzyme catalyses butanoyl-CoA + NAD(+) = (2E)-butenoyl-CoA + NADH + H(+). It participates in lipid metabolism; fatty acid biosynthesis. With respect to regulation, weakly inhibited by triclosan. Involved in the final reduction of the elongation cycle of fatty acid synthesis (FAS II). Catalyzes the NADH-dependent reduction of a carbon-carbon double bond in an enoyl moiety that is covalently linked to an acyl carrier protein (ACP). It can use both crotonyl-CoA and crotonyl-ACP. The chain is Enoyl-[acyl-carrier-protein] reductase [NADH] 1 from Vibrio cholerae serotype O1 (strain ATCC 39315 / El Tor Inaba N16961).